The primary structure comprises 177 residues: Ribosome maturation factor RimM (177 aa).

The region spanning 98 to 177 is the PRC barrel domain; that stretch reads GEEFYWRELY…RIEVDWDPGF (80 aa).

Belongs to the RimM family. As to quaternary structure, binds ribosomal protein uS19.

The protein resides in the cytoplasm. Its function is as follows. An accessory protein needed during the final step in the assembly of 30S ribosomal subunit, possibly for assembly of the head region. Essential for efficient processing of 16S rRNA. May be needed both before and after RbfA during the maturation of 16S rRNA. It has affinity for free ribosomal 30S subunits but not for 70S ribosomes. This Photobacterium profundum (strain SS9) protein is Ribosome maturation factor RimM.